The following is a 180-amino-acid chain: Adenine phosphoribosyltransferase (180 aa).

The residue at position 2 (S2) is an N-acetylserine. Phosphoserine is present on residues S15 and S30. Y60 carries the phosphotyrosine modification. Position 66 is a phosphoserine (S66). Residue K114 is modified to N6-acetyllysine. T135 is modified (phosphothreonine).

This sequence belongs to the purine/pyrimidine phosphoribosyltransferase family. As to quaternary structure, homodimer.

It localises to the cytoplasm. The catalysed reaction is AMP + diphosphate = 5-phospho-alpha-D-ribose 1-diphosphate + adenine. Its pathway is purine metabolism; AMP biosynthesis via salvage pathway; AMP from adenine: step 1/1. In terms of biological role, catalyzes a salvage reaction resulting in the formation of AMP, that is energically less costly than de novo synthesis. This is Adenine phosphoribosyltransferase from Mastomys natalensis (African soft-furred rat).